Consider the following 452-residue polypeptide: NADH-quinone oxidoreductase subunit H (452 aa).

9 helical membrane passes run Ile28–Ile48, Val96–Ile116, Leu136–Leu156, Val177–Thr197, Ile210–Glu230, Ala264–Ala286, Trp301–Val321, Lys335–Ile355, and Tyr366–Trp386.

It belongs to the complex I subunit 1 family. NDH-1 is composed of 14 different subunits. Subunits NuoA, H, J, K, L, M, N constitute the membrane sector of the complex.

The protein localises to the cell membrane. It carries out the reaction a quinone + NADH + 5 H(+)(in) = a quinol + NAD(+) + 4 H(+)(out). NDH-1 shuttles electrons from NADH, via FMN and iron-sulfur (Fe-S) centers, to quinones in the respiratory chain. The immediate electron acceptor for the enzyme in this species is believed to be ubiquinone. Couples the redox reaction to proton translocation (for every two electrons transferred, four hydrogen ions are translocated across the cytoplasmic membrane), and thus conserves the redox energy in a proton gradient. This subunit may bind ubiquinone. In Thermobifida fusca (strain YX), this protein is NADH-quinone oxidoreductase subunit H.